A 726-amino-acid chain; its full sequence is Catalase-peroxidase (726 aa).

Positions 1-33 are disordered; that stretch reads MSTTDDTHNTLSAGKCPFHQGGHDRSAGAGTAS. The tryptophyl-tyrosyl-methioninium (Trp-Tyr) (with M-252) cross-link spans 105-226; that stretch reads WHGAGTYRSI…LGATEMGLIY (122 aa). Histidine 106 acts as the Proton acceptor in catalysis. The segment at residues 226–252 is a cross-link (tryptophyl-tyrosyl-methioninium (Tyr-Met) (with W-105)); the sequence is YVNPEGPDHSGEPLSAAAAIRATFGNM. Position 267 (histidine 267) interacts with heme b.

The protein belongs to the peroxidase family. Peroxidase/catalase subfamily. In terms of assembly, homodimer or homotetramer. Heme b serves as cofactor. In terms of processing, formation of the three residue Trp-Tyr-Met cross-link is important for the catalase, but not the peroxidase activity of the enzyme.

It catalyses the reaction H2O2 + AH2 = A + 2 H2O. The enzyme catalyses 2 H2O2 = O2 + 2 H2O. Functionally, bifunctional enzyme with both catalase and broad-spectrum peroxidase activity. The polypeptide is Catalase-peroxidase (Salmonella arizonae (strain ATCC BAA-731 / CDC346-86 / RSK2980)).